The sequence spans 2446 residues: Transcription factor HIVEP2 (2446 aa).

Residues 1-93 (MDTGDTALGQ…YPPHRPSPYS (93 aa)) form a disordered region. Residues 17–28 (GETDKASGRWRQ) are compositionally biased toward basic and acidic residues. 2 C2H2-type zinc fingers span residues 189–211 (YICP…IRSH) and 217–239 (YPCI…RKSH). 4 disordered regions span residues 272-303 (HSDG…PIPL), 340-416 (ESSQ…PPNT), 543-563 (SNSV…LRGS), and 751-985 (SHGH…SFER). 2 stretches are compositionally biased toward polar residues: residues 381–416 (SEPS…PPNT) and 543–556 (SNSV…NLTI). A compositionally biased stretch (basic and acidic residues) spans 751–760 (SHGHTERFDP). Polar residues predominate over residues 766 to 777 (QPGSPSLVSEES). Over residues 782–791 (DSDKMSDLGG) the composition is skewed to basic and acidic residues. A compositionally biased stretch (polar residues) spans 800-812 (SVIQHTNSLSRPN). S819 bears the Phosphoserine mark. Residues 863–878 (PSPSQQVQQQSYHTQP) show a composition bias toward low complexity. A compositionally biased stretch (basic and acidic residues) spans 892–916 (RVTEEPDKPEKEKEAQSKEPEKPVE). Positions 937–943 (PKKKRLR) match the Nuclear localization signal motif. A phosphoserine mark is found at S950, S955, S1048, S1443, and S1447. A compositionally biased stretch (low complexity) spans 952–982 (GESSFESTGTGLSRSPSQESNLSHSSSFSMS). The tract at residues 1485–1603 (KDLSRPQKPQ…LEEEGKGHKR (119 aa)) is disordered. 2 stretches are compositionally biased toward low complexity: residues 1510 to 1533 (SGSS…SPSS) and 1576 to 1586 (SDMSMSPQSSS). C2H2-type zinc fingers lie at residues 1799 to 1821 (YICE…IRTH) and 1827 to 1851 (YVCK…SKAH). Disordered stretches follow at residues 1882–1951 (AAEK…VNVG) and 2024–2129 (EECM…RRDL). Residues 1899–1925 (DAEESDGEDGDDNDDDDEDEDDFDDQG) show a composition bias toward acidic residues. The span at 2029-2053 (PSEPSSSPRDFSPSSHHSSPGYDSS) shows a compositional bias: low complexity. 10 tandem repeats follow at residues 2053 to 2056 (SPCR), 2059 to 2062 (SPKR), 2071 to 2074 (SPRR), 2083 to 2086 (SPMR), 2089 to 2092 (SPRK), 2106 to 2109 (SPRR), 2112 to 2115 (SPRR), 2118 to 2121 (SPGK), 2130 to 2133 (SPRR), and 2145 to 2148 (SPRR). Residues 2053 to 2148 (SPCRDNSPKR…TTIRAPSPRR (96 aa)) form a 10 X 4 AA tandem repeats of S-P-[RGMKC]-[RK] region. The segment covering 2078 to 2107 (PRRDLSPMRHLSPRKEAALRREMSQRDVSP) has biased composition (basic and acidic residues). At S2118 the chain carries Phosphoserine. Disordered stretches follow at residues 2242 to 2325 (PALS…QEEN), 2371 to 2403 (HFSR…SQTP), and 2423 to 2446 (HSSK…SQLH). Residues S2297 and S2301 each carry the phosphoserine modification. A compositionally biased stretch (polar residues) spans 2307 to 2317 (KQSTSEDSLNA). The segment covering 2387 to 2396 (PDLHDGEKDN) has biased composition (basic and acidic residues). Residues S2429 and S2431 each carry the phosphoserine modification. Positions 2433–2446 (EESKDPSSEKSQLH) are enriched in basic and acidic residues.

As to quaternary structure, interacts with TCF4. As to expression, expressed in brain and skeletal muscle.

The protein localises to the nucleus. This protein specifically binds to the DNA sequence 5'-GGGACTTTCC-3' which is found in the enhancer elements of numerous viral promoters such as those of SV40, CMV, or HIV1. In addition, related sequences are found in the enhancer elements of a number of cellular promoters, including those of the class I MHC, interleukin-2 receptor, somatostatin receptor II, and interferon-beta genes. It may act in T-cell activation. In Homo sapiens (Human), this protein is Transcription factor HIVEP2 (HIVEP2).